The chain runs to 102 residues: Large ribosomal subunit protein bL21 (102 aa).

This sequence belongs to the bacterial ribosomal protein bL21 family. In terms of assembly, part of the 50S ribosomal subunit. Contacts protein L20.

This protein binds to 23S rRNA in the presence of protein L20. This chain is Large ribosomal subunit protein bL21, found in Geobacter metallireducens (strain ATCC 53774 / DSM 7210 / GS-15).